Consider the following 206-residue polypeptide: MSRPHFQFETDLAARGYLRIAGVDEVGRGPLAGPVMAAAVVLDPGAIPEGLNDSKQVTAKRREALAAQLAQVAQVGVGVAEVAEIDRLNIRRAAHLAMLRALDALPAPPDMALIDGRDRPDDLPCAAHAIIKGDTKSLSIAAASIVAKVARDRVMTALAAEFPGYGWETNAGYPTQAHRAALLDIGVSPHHRRSFRPVHNILYQEK.

Residues 18–206 (LRIAGVDEVG…PVHNILYQEK (189 aa)) form the RNase H type-2 domain. Residues D24, E25, and D115 each coordinate a divalent metal cation.

Belongs to the RNase HII family. The cofactor is Mn(2+). Mg(2+) serves as cofactor.

It localises to the cytoplasm. The enzyme catalyses Endonucleolytic cleavage to 5'-phosphomonoester.. Endonuclease that specifically degrades the RNA of RNA-DNA hybrids. This is Ribonuclease HII from Dinoroseobacter shibae (strain DSM 16493 / NCIMB 14021 / DFL 12).